Consider the following 196-residue polypeptide: Peptidyl-tRNA hydrolase (196 aa).

Histidine 15 serves as a coordination point for tRNA. The Proton acceptor role is filled by histidine 20. The tRNA site is built by tyrosine 66, asparagine 68, and asparagine 114.

This sequence belongs to the PTH family. In terms of assembly, monomer.

The protein resides in the cytoplasm. It catalyses the reaction an N-acyl-L-alpha-aminoacyl-tRNA + H2O = an N-acyl-L-amino acid + a tRNA + H(+). Functionally, hydrolyzes ribosome-free peptidyl-tRNAs (with 1 or more amino acids incorporated), which drop off the ribosome during protein synthesis, or as a result of ribosome stalling. In terms of biological role, catalyzes the release of premature peptidyl moieties from peptidyl-tRNA molecules trapped in stalled 50S ribosomal subunits, and thus maintains levels of free tRNAs and 50S ribosomes. In Polynucleobacter asymbioticus (strain DSM 18221 / CIP 109841 / QLW-P1DMWA-1) (Polynucleobacter necessarius subsp. asymbioticus), this protein is Peptidyl-tRNA hydrolase.